The following is a 217-amino-acid chain: Neuron-specific vesicular protein calcyon (217 aa).

The interval 1–25 (MVKLGCSFSGKPGKDPGDQDGAAMD) is disordered. Over 1-87 (MVKLGCSFSG…EEGRRLPTAR (87 aa)) the chain is Extracellular. Asparagine 73 carries N-linked (GlcNAc...) asparagine glycosylation. A helical transmembrane segment spans residues 88 to 108 (MIAFAMALLGCVLIMYKAIWY). Residues 109 to 217 (DQFTCPDGFL…AGSAAPPPAQ (109 aa)) are Cytoplasmic-facing. The disordered stretch occupies residues 162 to 217 (PAAWGDGYRAAKEERKGPTQAGAAAAATEPPGKPSAKAEKEAARKAAGSAAPPPAQ).

It belongs to the NSG family. As to quaternary structure, interacts with CLTA. In terms of processing, glycosylated. As to expression, expressed in the pyramidal cells of the prefrontal cortex, in hypothalamus and in caudate nucleus. No expression in spleen. Up-regulated in the prefrontal cortex of schizophrenic patients with nearly twice the levels of non-schizophrenics.

It localises to the cytoplasmic vesicle membrane. It is found in the cell membrane. Functionally, interacts with clathrin light chain A and stimulates clathrin self-assembly and clathrin-mediated endocytosis. This is Neuron-specific vesicular protein calcyon (CALY) from Homo sapiens (Human).